Here is a 190-residue protein sequence, read N- to C-terminus: Dynactin subunit 6 (190 aa).

Position 186 is a phosphothreonine; by CDK1 (T186).

It belongs to the dynactin subunits 5/6 family. Dynactin subunit 6 subfamily. Subunit of dynactin, a multiprotein complex part of a tripartite complex with dynein and a adapter, such as BICDL1, BICD2 or HOOK3. The dynactin complex is built around ACTR1A/ACTB filament and consists of an actin-related filament composed of a shoulder domain, a pointed end and a barbed end. Its length is defined by its flexible shoulder domain. The soulder is composed of 2 DCTN1 subunits, 4 DCTN2 and 2 DCTN3. The 4 DCNT2 (via N-terminus) bind the ACTR1A filament and act as molecular rulers to determine the length. The pointed end is important for binding dynein-dynactin cargo adapters. Consists of 4 subunits: ACTR10, DCNT4, DCTN5 and DCTN6. Within the complex DCTN6 forms a heterodimer with DCTN5. The barbed end is composed of a CAPZA1:CAPZB heterodimers, which binds ACTR1A/ACTB filament and dynactin and stabilizes dynactin. Interacts with PLK1. Interacts with N4BP2L1. Phosphorylation at Thr-186 by CDK1 during mitotic prometaphase creates a binding site for PLK1 that facilitates its recruitment to kinetochores.

It localises to the cytoplasm. Its subcellular location is the cytoskeleton. The protein localises to the chromosome. The protein resides in the centromere. It is found in the kinetochore. Functionally, part of the dynactin complex that activates the molecular motor dynein for ultra-processive transport along microtubules. The protein is Dynactin subunit 6 (DCTN6) of Bos taurus (Bovine).